Consider the following 344-residue polypeptide: Centromere protein L (344 aa).

S39 is subject to Phosphoserine. Position 43 is a phosphothreonine (T43). At S53 the chain carries Phosphoserine.

Belongs to the CENP-L/IML3 family. As to quaternary structure, component of the CENPA-CAD complex, composed of CENPI, CENPK, CENPL, CENPO, CENPP, CENPQ, CENPR and CENPS. The CENPA-CAD complex interacts with the CENPA-NAC complex, at least composed of CENPA, CENPC, CENPH, CENPM, CENPN, CENPT and CENPU.

Its subcellular location is the nucleus. It is found in the chromosome. It localises to the centromere. Its function is as follows. Component of the CENPA-CAD (nucleosome distal) complex, a complex recruited to centromeres which is involved in assembly of kinetochore proteins, mitotic progression and chromosome segregation. May be involved in incorporation of newly synthesized CENPA into centromeres via its interaction with the CENPA-NAC complex. This is Centromere protein L (CENPL) from Homo sapiens (Human).